The chain runs to 551 residues: Sodium-dependent high-affinity dicarboxylate transporter 2 (551 aa).

The next 10 membrane-spanning stretches (helical) occupy residues 9–29 (LIKKLLVLLGPLVAVPLLFFG), 34–54 (CLFSIIFLSTYWIGEAFPIGV), 82–102 (SIVLFMCTLIMAMAVEATGLH), 119–139 (VMLLGFMCITSFISFFVSDTA), 194–214 (FCKALILACAHASLIGGTAII), 243–263 (WMVFAIPPMFVYLLASYIILV), 347–367 (VSGVLISCILFVWPKDPFDPI), 417–437 (IFVGMSSLPLQLTVTTIIVIM), 449–469 (IFIPISLGVAESMGVHPLYLA), and 497–517 (VISMVEMIVCGFLLNIACILI).

This sequence belongs to the SLC13A/DASS transporter (TC 2.A.47) family. NADC subfamily.

It localises to the membrane. In terms of biological role, high-affinity sodium-dicarboxylate cotransporter that accepts a range of tricarboxylic acid-cycle intermediates with 4-5 carbon atoms. There is no interaction with monocarboxylates. The polypeptide is Sodium-dependent high-affinity dicarboxylate transporter 2 (nac-2) (Caenorhabditis elegans).